The following is an 82-amino-acid chain: Large ribosomal subunit protein bL31B-2 (82 aa).

The protein belongs to the bacterial ribosomal protein bL31 family. Type B subfamily. As to quaternary structure, part of the 50S ribosomal subunit.

The polypeptide is Large ribosomal subunit protein bL31B-2 (Streptomyces avermitilis (strain ATCC 31267 / DSM 46492 / JCM 5070 / NBRC 14893 / NCIMB 12804 / NRRL 8165 / MA-4680)).